The primary structure comprises 1804 residues: Obscurin-like protein 1 (1804 aa).

Ser-10 is modified (phosphoserine). Ig-like domains follow at residues 12-100 (PCFL…AAVT), 128-225 (PKFL…ALLQ), 241-330 (PKPV…QTLS), and 339-425 (PRLR…ANVT). Residues 17–19 (FPR) form an interaction with TTN region. Cys-33 and Cys-84 form a disulfide bridge. An interaction with TTN region spans residues 85 to 94 (RARNAAGEAY). A disulfide bond links Cys-149 and Cys-209. The tract at residues 227-249 (HQPRESPPQDPDENPKPVLEPLK) is disordered. 2 disulfide bridges follow: Cys-267/Cys-319 and Cys-362/Cys-412. One can recognise a Fibronectin type-III domain in the interval 517 to 615 (PPGPPVMVEM…FNGSAHLVPT (99 aa)). Ig-like domains lie at 720–800 (PQDK…FGVT), 804–891 (PPVH…FTVT), 902–982 (PSSE…FTIT), 986–1075 (PPVR…VTVT), 1078–1165 (PERI…FNVS), 1176–1261 (PEAA…FNVQ), 1266–1442 (PPVK…ARLS), 1536–1621 (PVTI…ARLT), 1625–1694 (REVS…EDTG), and 1702–1798 (PAQS…ADTQ). 8 cysteine pairs are disulfide-bonded: Cys-738–Cys-788, Cys-829–Cys-879, Cys-920–Cys-970, Cys-1011–Cys-1061, Cys-1103–Cys-1153, Cys-1195–Cys-1245, Cys-1289–Cys-1430, and Cys-1558–Cys-1608.

In terms of assembly, component of the 3M complex, composed of core components CUL7, CCDC8 and OBSL1. Interacts with CCDC8. Interacts with CUL7; the interaction is direct. Interacts with FBXW8. Interacts (via N-terminal Ig-like domain) with TTN/titin (via C-terminal Ig-like domain); the interaction is direct.

It localises to the cytoplasm. The protein localises to the perinuclear region. The protein resides in the golgi apparatus. Its function is as follows. Core component of the 3M complex, a complex required to regulate microtubule dynamics and genome integrity. It is unclear how the 3M complex regulates microtubules, it could act by controlling the level of a microtubule stabilizer. Acts as a regulator of the Cul7-RING(FBXW8) ubiquitin-protein ligase, playing a critical role in the ubiquitin ligase pathway that regulates Golgi morphogenesis and dendrite patterning in brain. Required to localize CUL7 to the Golgi apparatus in neurons. This is Obscurin-like protein 1 (Obsl1) from Mus musculus (Mouse).